The chain runs to 150 residues: Snaclec CTL-Eoc125 (150 aa).

An N-terminal signal peptide occupies residues 1 to 23 (MGRFISVSFGLLVVFLSLSGIGA). 3 disulfides stabilise this stretch: Cys-27-Cys-38, Cys-55-Cys-144, and Cys-121-Cys-136. Residues 34–145 (YEGHCYKVFS…CSSTQQFICK (112 aa)) enclose the C-type lectin domain.

The protein belongs to the snaclec family. In terms of assembly, heterodimer; disulfide-linked. Expressed by the venom gland.

The protein resides in the secreted. In terms of biological role, interferes with one step of hemostasis (modulation of platelet aggregation, or coagulation cascade, for example). This chain is Snaclec CTL-Eoc125, found in Echis ocellatus (Ocellated saw-scaled viper).